The following is a 385-amino-acid chain: Succinate--CoA ligase [ADP-forming] subunit beta (385 aa).

The ATP-grasp domain maps to 9–244; that stretch reads KALFRTFGVP…LDEEDPLEVE (236 aa). Residues Lys46, 53–55, Glu99, Gln102, and Glu107 each bind ATP; that span reads GRG. Asn199 and Asp213 together coordinate Mg(2+). Substrate contacts are provided by residues Asn264 and 321–323; that span reads GIL.

The protein belongs to the succinate/malate CoA ligase beta subunit family. As to quaternary structure, heterotetramer of two alpha and two beta subunits. Mg(2+) serves as cofactor.

The enzyme catalyses succinate + ATP + CoA = succinyl-CoA + ADP + phosphate. It carries out the reaction GTP + succinate + CoA = succinyl-CoA + GDP + phosphate. It functions in the pathway carbohydrate metabolism; tricarboxylic acid cycle; succinate from succinyl-CoA (ligase route): step 1/1. Functionally, succinyl-CoA synthetase functions in the citric acid cycle (TCA), coupling the hydrolysis of succinyl-CoA to the synthesis of either ATP or GTP and thus represents the only step of substrate-level phosphorylation in the TCA. The beta subunit provides nucleotide specificity of the enzyme and binds the substrate succinate, while the binding sites for coenzyme A and phosphate are found in the alpha subunit. This chain is Succinate--CoA ligase [ADP-forming] subunit beta, found in Desulforapulum autotrophicum (strain ATCC 43914 / DSM 3382 / VKM B-1955 / HRM2) (Desulfobacterium autotrophicum).